A 172-amino-acid polypeptide reads, in one-letter code: Large ribosomal subunit protein eL20 (172 aa).

The protein belongs to the eukaryotic ribosomal protein eL20 family. As to quaternary structure, component of the large ribosomal subunit. Mature ribosomes consist of a small (40S) and a large (60S) subunit. The 40S subunit contains about 32 different proteins and 1 molecule of RNA (18S). The 60S subunit contains 45 different proteins and 3 molecules of RNA (25S, 5.8S and 5S).

The protein localises to the cytoplasm. In terms of biological role, component of the ribosome, a large ribonucleoprotein complex responsible for the synthesis of proteins in the cell. The small ribosomal subunit (SSU) binds messenger RNAs (mRNAs) and translates the encoded message by selecting cognate aminoacyl-transfer RNA (tRNA) molecules. The large subunit (LSU) contains the ribosomal catalytic site termed the peptidyl transferase center (PTC), which catalyzes the formation of peptide bonds, thereby polymerizing the amino acids delivered by tRNAs into a polypeptide chain. The nascent polypeptides leave the ribosome through a tunnel in the LSU and interact with protein factors that function in enzymatic processing, targeting, and the membrane insertion of nascent chains at the exit of the ribosomal tunnel. This Candida albicans (strain SC5314 / ATCC MYA-2876) (Yeast) protein is Large ribosomal subunit protein eL20.